The primary structure comprises 377 residues: GTP 3',8-cyclase (377 aa).

A disordered region spans residues 1–29 (MTTRLYLSPTPPRNDREGASKSTSASIKH). Positions 45-271 (RFGRIARDLR…FTLSPAKEPR (227 aa)) constitute a Radical SAM core domain. Position 54 (R54) interacts with GTP. C61 and C65 together coordinate [4Fe-4S] cluster. Y67 contacts S-adenosyl-L-methionine. Position 68 (C68) interacts with [4Fe-4S] cluster. R105 is a binding site for GTP. G109 contacts S-adenosyl-L-methionine. Residue T140 participates in GTP binding. Position 164 (S164) interacts with S-adenosyl-L-methionine. K201 is a GTP binding site. Residue M235 participates in S-adenosyl-L-methionine binding. Residues C304 and C307 each contribute to the [4Fe-4S] cluster site. Residue 309–311 (RSR) participates in GTP binding. C321 lines the [4Fe-4S] cluster pocket.

Belongs to the radical SAM superfamily. MoaA family. Monomer and homodimer. [4Fe-4S] cluster serves as cofactor.

The catalysed reaction is GTP + AH2 + S-adenosyl-L-methionine = (8S)-3',8-cyclo-7,8-dihydroguanosine 5'-triphosphate + 5'-deoxyadenosine + L-methionine + A + H(+). Its pathway is cofactor biosynthesis; molybdopterin biosynthesis. In terms of biological role, catalyzes the cyclization of GTP to (8S)-3',8-cyclo-7,8-dihydroguanosine 5'-triphosphate. In Corynebacterium glutamicum (strain ATCC 13032 / DSM 20300 / JCM 1318 / BCRC 11384 / CCUG 27702 / LMG 3730 / NBRC 12168 / NCIMB 10025 / NRRL B-2784 / 534), this protein is GTP 3',8-cyclase.